Consider the following 116-residue polypeptide: Nucleoid-associated protein Tfu_0045 (116 aa).

The protein belongs to the YbaB/EbfC family. In terms of assembly, homodimer.

It localises to the cytoplasm. The protein localises to the nucleoid. Its function is as follows. Binds to DNA and alters its conformation. May be involved in regulation of gene expression, nucleoid organization and DNA protection. The protein is Nucleoid-associated protein Tfu_0045 of Thermobifida fusca (strain YX).